Reading from the N-terminus, the 473-residue chain is 3-oxoacyl-[acyl-carrier-protein] synthase I, chloroplastic (473 aa).

Residues 1-10 (MQALQSSSLR) show a composition bias toward polar residues. Residues 1 to 26 (MQALQSSSLRASPPNPLRLPSNRQSH) are disordered. A chloroplast-targeting transit peptide spans 1–46 (MQALQSSSLRASPPNPLRLPSNRQSHQLITNARPLRRQQRSFISAS). The region spanning 60 to 470 (KKRVVITGMG…GHNSVVAFSA (411 aa)) is the Ketosynthase family 3 (KS3) domain. Catalysis depends on for beta-ketoacyl synthase activity residues Cys224, His364, and His400.

The protein belongs to the thiolase-like superfamily. Beta-ketoacyl-ACP synthases family. Homodimer.

The protein localises to the plastid. It localises to the chloroplast stroma. The catalysed reaction is a fatty acyl-[ACP] + malonyl-[ACP] + H(+) = a 3-oxoacyl-[ACP] + holo-[ACP] + CO2. Its function is as follows. Catalyzes the condensation reaction of fatty acid synthesis by the addition to an acyl acceptor of two carbons from malonyl-ACP. Specific for elongation from C-10 to unsaturated C-16 and C-18 fatty acids. The sequence is that of 3-oxoacyl-[acyl-carrier-protein] synthase I, chloroplastic (KAS1) from Arabidopsis thaliana (Mouse-ear cress).